A 100-amino-acid polypeptide reads, in one-letter code: Urease subunit gamma (100 aa).

Belongs to the urease gamma subunit family. Heterotrimer of UreA (gamma), UreB (beta) and UreC (alpha) subunits. Three heterotrimers associate to form the active enzyme.

The protein localises to the cytoplasm. It carries out the reaction urea + 2 H2O + H(+) = hydrogencarbonate + 2 NH4(+). Its pathway is nitrogen metabolism; urea degradation; CO(2) and NH(3) from urea (urease route): step 1/1. This chain is Urease subunit gamma, found in Paenarthrobacter aurescens (strain TC1).